The primary structure comprises 224 residues: Casparian strip membrane protein 1 (224 aa).

Residues methionine 1 to alanine 22 are disordered. Topologically, residues methionine 1 to cysteine 62 are cytoplasmic. A helical membrane pass occupies residues leucine 63 to isoleucine 83. Residues serine 84–alanine 110 lie on the Extracellular side of the membrane. Residues phenylalanine 111–phenylalanine 131 traverse the membrane as a helical segment. Residues serine 132–arginine 145 are Cytoplasmic-facing. The chain crosses the membrane as a helical span at residues leucine 146 to alanine 166. At alanine 167–valine 200 the chain is on the extracellular side. Residues valine 201–isoleucine 221 traverse the membrane as a helical segment. Topologically, residues arginine 222–arginine 224 are cytoplasmic.

Belongs to the Casparian strip membrane proteins (CASP) family. Homodimer and heterodimers.

The protein localises to the cell membrane. Regulates membrane-cell wall junctions and localized cell wall deposition. Required for establishment of the Casparian strip membrane domain (CSD) and the subsequent formation of Casparian strips, a cell wall modification of the root endodermis that determines an apoplastic barrier between the intraorganismal apoplasm and the extraorganismal apoplasm and prevents lateral diffusion. This Oryza sativa subsp. indica (Rice) protein is Casparian strip membrane protein 1.